The sequence spans 456 residues: Tyrosine phenol-lyase (456 aa).

Lys257 carries the N6-(pyridoxal phosphate)lysine modification.

Belongs to the beta-eliminating lyase family. As to quaternary structure, homotetramer. Pyridoxal 5'-phosphate serves as cofactor.

The catalysed reaction is L-tyrosine + H2O = phenol + pyruvate + NH4(+). This Citrobacter intermedius (Escherichia intermedia) protein is Tyrosine phenol-lyase (tpl).